Here is a 377-residue protein sequence, read N- to C-terminus: O-phospho-L-seryl-tRNA:Cys-tRNA synthase (377 aa).

Pyridoxal 5'-phosphate-binding positions include 83–84 (AR), asparagine 188, and 211–213 (SGH). Lysine 214 is modified (N6-(pyridoxal phosphate)lysine).

It belongs to the SepCysS family. As to quaternary structure, homodimer. Interacts with SepRS. The cofactor is pyridoxal 5'-phosphate.

It carries out the reaction O-phospho-L-seryl-tRNA(Cys) + hydrogen sulfide + H(+) = L-cysteinyl-tRNA(Cys) + phosphate. Converts O-phospho-L-seryl-tRNA(Cys) (Sep-tRNA(Cys)) to L-cysteinyl-tRNA(Cys) (Cys-tRNA(Cys)). The chain is O-phospho-L-seryl-tRNA:Cys-tRNA synthase from Methanothermobacter thermautotrophicus (strain ATCC 29096 / DSM 1053 / JCM 10044 / NBRC 100330 / Delta H) (Methanobacterium thermoautotrophicum).